A 370-amino-acid chain; its full sequence is Cytochrome b (370 aa).

The next 4 membrane-spanning stretches (helical) occupy residues 30–50 (FGSM…FLAF), 74–96 (WVFR…LHIF), 109–129 (VWMS…MGYV), and 175–195 (FFVL…GHLI). Positions 80 and 94 each coordinate heme b. Positions 179 and 193 each coordinate heme b. Residue His198 coordinates a ubiquinone. The next 4 helical transmembrane spans lie at 221 to 240 (YLGK…VLSL), 284 to 304 (VLGV…ALVN), 316 to 336 (FLVF…QCTV), and 342 to 362 (ILSP…LFIF).

The protein belongs to the cytochrome b family. As to quaternary structure, the main subunits of complex b-c1 are: cytochrome b, cytochrome c1 and the Rieske protein. Requires heme b as cofactor.

The protein resides in the mitochondrion inner membrane. Functionally, component of the ubiquinol-cytochrome c reductase complex (complex III or cytochrome b-c1 complex) that is part of the mitochondrial respiratory chain. The b-c1 complex mediates electron transfer from ubiquinol to cytochrome c. Contributes to the generation of a proton gradient across the mitochondrial membrane that is then used for ATP synthesis. The polypeptide is Cytochrome b (Caenorhabditis elegans).